We begin with the raw amino-acid sequence, 520 residues long: Maturase K (520 aa).

It belongs to the intron maturase 2 family. MatK subfamily.

Its subcellular location is the plastid. The protein resides in the chloroplast. In terms of biological role, usually encoded in the trnK tRNA gene intron. Probably assists in splicing its own and other chloroplast group II introns. This is Maturase K from Maianthemum dilatatum (False lily-of-the-valley).